Reading from the N-terminus, the 188-residue chain is Peptidyl-tRNA hydrolase (188 aa).

Position 15 (Y15) interacts with tRNA. Catalysis depends on H20, which acts as the Proton acceptor. TRNA-binding residues include F66, N68, and N114.

This sequence belongs to the PTH family. As to quaternary structure, monomer.

The protein localises to the cytoplasm. The catalysed reaction is an N-acyl-L-alpha-aminoacyl-tRNA + H2O = an N-acyl-L-amino acid + a tRNA + H(+). Functionally, hydrolyzes ribosome-free peptidyl-tRNAs (with 1 or more amino acids incorporated), which drop off the ribosome during protein synthesis, or as a result of ribosome stalling. Its function is as follows. Catalyzes the release of premature peptidyl moieties from peptidyl-tRNA molecules trapped in stalled 50S ribosomal subunits, and thus maintains levels of free tRNAs and 50S ribosomes. This is Peptidyl-tRNA hydrolase from Lactococcus lactis subsp. lactis (strain IL1403) (Streptococcus lactis).